A 499-amino-acid polypeptide reads, in one-letter code: Phenylalanine--tRNA ligase alpha subunit (499 aa).

L-phenylalanine contacts are provided by residues Thr-342, 381–383, and Phe-422; that span reads QID. Mg(2+) is bound at residue Glu-424. Phe-447 serves as a coordination point for L-phenylalanine.

Belongs to the class-II aminoacyl-tRNA synthetase family. Phe-tRNA synthetase alpha subunit type 2 subfamily. As to quaternary structure, tetramer of two alpha and two beta subunits. Requires Mg(2+) as cofactor.

It is found in the cytoplasm. It carries out the reaction tRNA(Phe) + L-phenylalanine + ATP = L-phenylalanyl-tRNA(Phe) + AMP + diphosphate + H(+). This chain is Phenylalanine--tRNA ligase alpha subunit, found in Pyrococcus furiosus (strain ATCC 43587 / DSM 3638 / JCM 8422 / Vc1).